We begin with the raw amino-acid sequence, 255 residues long: Proteasome subunit alpha type-3 (255 aa).

Residue serine 2 is modified to N-acetylserine. Lysine 57, lysine 206, and lysine 230 each carry N6-acetyllysine. Phosphoserine occurs at positions 243 and 250.

The protein belongs to the peptidase T1A family. The 26S proteasome consists of a 20S proteasome core and two 19S regulatory subunits. The 20S proteasome core is a barrel-shaped complex made of 28 subunits that are arranged in four stacked rings. The two outer rings are each formed by seven alpha subunits, and the two inner rings are formed by seven beta subunits. The proteolytic activity is exerted by three beta-subunits PSMB5, PSMB6 and PSMB7. Interacts with AURKB. Interacts with CDKN1A. Interacts with MDM2 and RB1. Interacts with the C-terminus of TBXA2R isoform 2. Interacts with DNAJB2. As to quaternary structure, (Microbial infection) Interacts with HIV-1 Tat protein. In terms of assembly, (Microbial infection) Interacts with hepatitis C virus (HCV) F protein. (Microbial infection) Interacts with Epstein-Barr virus EBNA3 proteins.

It is found in the cytoplasm. The protein localises to the nucleus. Its function is as follows. Component of the 20S core proteasome complex involved in the proteolytic degradation of most intracellular proteins. This complex plays numerous essential roles within the cell by associating with different regulatory particles. Associated with two 19S regulatory particles, forms the 26S proteasome and thus participates in the ATP-dependent degradation of ubiquitinated proteins. The 26S proteasome plays a key role in the maintenance of protein homeostasis by removing misfolded or damaged proteins that could impair cellular functions, and by removing proteins whose functions are no longer required. Associated with the PA200 or PA28, the 20S proteasome mediates ubiquitin-independent protein degradation. This type of proteolysis is required in several pathways including spermatogenesis (20S-PA200 complex) or generation of a subset of MHC class I-presented antigenic peptides (20S-PA28 complex). Binds to the C-terminus of CDKN1A and thereby mediates its degradation. Negatively regulates the membrane trafficking of the cell-surface thromboxane A2 receptor (TBXA2R) isoform 2. This is Proteasome subunit alpha type-3 from Homo sapiens (Human).